The sequence spans 289 residues: ATP synthase gamma chain (289 aa).

This sequence belongs to the ATPase gamma chain family. As to quaternary structure, F-type ATPases have 2 components, CF(1) - the catalytic core - and CF(0) - the membrane proton channel. CF(1) has five subunits: alpha(3), beta(3), gamma(1), delta(1), epsilon(1). CF(0) has three main subunits: a, b and c.

Its subcellular location is the cell inner membrane. Produces ATP from ADP in the presence of a proton gradient across the membrane. The gamma chain is believed to be important in regulating ATPase activity and the flow of protons through the CF(0) complex. The polypeptide is ATP synthase gamma chain (Cereibacter sphaeroides (strain ATCC 17023 / DSM 158 / JCM 6121 / CCUG 31486 / LMG 2827 / NBRC 12203 / NCIMB 8253 / ATH 2.4.1.) (Rhodobacter sphaeroides)).